A 449-amino-acid polypeptide reads, in one-letter code: Kynurenine 3-monooxygenase (449 aa).

Belongs to the aromatic-ring hydroxylase family. KMO subfamily. FAD serves as cofactor.

The catalysed reaction is L-kynurenine + NADPH + O2 + H(+) = 3-hydroxy-L-kynurenine + NADP(+) + H2O. It participates in cofactor biosynthesis; NAD(+) biosynthesis; quinolinate from L-kynurenine: step 1/3. Functionally, catalyzes the hydroxylation of L-kynurenine (L-Kyn) to form 3-hydroxy-L-kynurenine (L-3OHKyn). Required for synthesis of quinolinic acid. This chain is Kynurenine 3-monooxygenase, found in Legionella pneumophila (strain Lens).